Consider the following 490-residue polypeptide: MVPVIALVGRPNVGKSTLFNRLTRTRDAIVGDLSGLTRDRQYGEAKWQGRSYILIDTGGISGDEHGMDEKMAEQSLLAIEEADVVLFLVDAKAGFTAADQMIAEHLRKRNKRSHVVANKVDNIDPEMARAEFAPLGMGHAIPIAGAHGRGITQLLEAALSDFPRDDDEPAEGEEEEVVAEGEEAKRIPGPSEKDGIKIAIIGRPNVGKSTLVNRMLGEDRVIVYDQPGTTRDSIYIPFERNDEKYTLIDTAGVRKRGKIHEEVEKFSVVKTLQAIKDANVVIFVMDAREGVVDHDLNLLGFALEAGRALVIAINKWDGMTPSERDFVKVELQRRLFFVDFADIHFISALHGTGVGNLYASVQNSFKSAVTRWPTSRLTQILEDAVSEHQPPMVNSRRIKLRYAHLGGANPPIIVIHGNQIEKVPKSYVRYLENTYRRVLKLVGTPIRIEFKGGENPYEGNKNTLTDRQVNKKRRLMSHNKKASKKRRDKK.

2 consecutive EngA-type G domains span residues 3–166 (PVIA…PRDD) and 196–369 (IKIA…KSAV). GTP is bound by residues 9–16 (GRPNVGKS), 56–60 (DTGGI), and 118–121 (NKVD). Residues 162-189 (FPRDDDEPAEGEEEEVVAEGEEAKRIPG) form a disordered region. A compositionally biased stretch (acidic residues) spans 164 to 181 (RDDDEPAEGEEEEVVAEG). GTP-binding positions include 202-209 (GRPNVGKS), 249-253 (DTAGV), and 314-317 (NKWD). The 85-residue stretch at 370-454 (TRWPTSRLTQ…PIRIEFKGGE (85 aa)) folds into the KH-like domain. The disordered stretch occupies residues 453–490 (GENPYEGNKNTLTDRQVNKKRRLMSHNKKASKKRRDKK). A compositionally biased stretch (basic residues) spans 470–490 (NKKRRLMSHNKKASKKRRDKK).

This sequence belongs to the TRAFAC class TrmE-Era-EngA-EngB-Septin-like GTPase superfamily. EngA (Der) GTPase family. As to quaternary structure, associates with the 50S ribosomal subunit.

Functionally, GTPase that plays an essential role in the late steps of ribosome biogenesis. This Pseudomonas fluorescens (strain Pf0-1) protein is GTPase Der.